The sequence spans 277 residues: Large ribosomal subunit protein uL2 (277 aa).

Positions 223–277 are disordered; the sequence is VAMNPVDHPHGGGEGRTSTGRHPVTPWGKRTLGKKTRKRKASDKYIIRSRRARKR. Over residues 253-277 the composition is skewed to basic residues; it reads TLGKKTRKRKASDKYIIRSRRARKR.

Belongs to the universal ribosomal protein uL2 family. Part of the 50S ribosomal subunit. Forms a bridge to the 30S subunit in the 70S ribosome.

One of the primary rRNA binding proteins. Required for association of the 30S and 50S subunits to form the 70S ribosome, for tRNA binding and peptide bond formation. It has been suggested to have peptidyltransferase activity; this is somewhat controversial. Makes several contacts with the 16S rRNA in the 70S ribosome. The polypeptide is Large ribosomal subunit protein uL2 (Halothermothrix orenii (strain H 168 / OCM 544 / DSM 9562)).